The following is a 387-amino-acid chain: 3-ketoacyl-CoA thiolase (387 aa).

The active-site Acyl-thioester intermediate is C91. Residues H343 and C373 each act as proton acceptor in the active site.

It belongs to the thiolase-like superfamily. Thiolase family. As to quaternary structure, heterotetramer of two alpha chains (FadB) and two beta chains (FadA).

Its subcellular location is the cytoplasm. It catalyses the reaction an acyl-CoA + acetyl-CoA = a 3-oxoacyl-CoA + CoA. The protein operates within lipid metabolism; fatty acid beta-oxidation. In terms of biological role, catalyzes the final step of fatty acid oxidation in which acetyl-CoA is released and the CoA ester of a fatty acid two carbons shorter is formed. In Shewanella oneidensis (strain ATCC 700550 / JCM 31522 / CIP 106686 / LMG 19005 / NCIMB 14063 / MR-1), this protein is 3-ketoacyl-CoA thiolase.